Reading from the N-terminus, the 182-residue chain is MAPTVLPASGNPLVFFDITLGGEPLGRITFELFKDVVPRTAENFRQFCTGESKNNLGRPQGYKGSKFHRIIPNFMCQGGDFLNGDGTGSTCIYGTKSFADENFLLKHDTPGLLSMANAGPNTNGSQFFITTVPTPFLDGKHVVFGKVVDGMDVVKKMENTKTGYRGKDVPNLDVVIAQCGEM.

Residues 15–181 (FFDITLGGEP…LDVVIAQCGE (167 aa)) enclose the PPIase cyclophilin-type domain.

Belongs to the cyclophilin-type PPIase family. PPIase H subfamily.

The protein resides in the nucleus. The catalysed reaction is [protein]-peptidylproline (omega=180) = [protein]-peptidylproline (omega=0). Its function is as follows. PPIases accelerate the folding of proteins. It catalyzes the cis-trans isomerization of proline imidic peptide bonds in oligopeptides. This chain is Peptidyl-prolyl cis-trans isomerase H (cyp-3), found in Neurospora crassa (strain ATCC 24698 / 74-OR23-1A / CBS 708.71 / DSM 1257 / FGSC 987).